The sequence spans 70 residues: ATP synthase subunit epsilon, mitochondrial (70 aa).

Belongs to the eukaryotic ATPase epsilon family. In terms of assembly, F-type ATPases have 2 components, CF(1) - the catalytic core - and CF(0) - the membrane proton channel. CF(1) has five subunits: alpha(3), beta(3), gamma(1), delta(1), epsilon(1). CF(0) has three main subunits: a, b and c.

Its subcellular location is the mitochondrion. It localises to the mitochondrion inner membrane. In terms of biological role, mitochondrial membrane ATP synthase (F(1)F(0) ATP synthase or Complex V) produces ATP from ADP in the presence of a proton gradient across the membrane which is generated by electron transport complexes of the respiratory chain. F-type ATPases consist of two structural domains, F(1) - containing the extramembraneous catalytic core, and F(0) - containing the membrane proton channel, linked together by a central stalk and a peripheral stalk. During catalysis, ATP synthesis in the catalytic domain of F(1) is coupled via a rotary mechanism of the central stalk subunits to proton translocation. Part of the complex F(1) domain and of the central stalk which is part of the complex rotary element. Rotation of the central stalk against the surrounding alpha(3)beta(3) subunits leads to hydrolysis of ATP in three separate catalytic sites on the beta subunits. The chain is ATP synthase subunit epsilon, mitochondrial from Ipomoea batatas (Sweet potato).